Consider the following 785-residue polypeptide: Toll-like receptor 2 (785 aa).

The N-terminal stretch at 1–17 is a signal peptide; the sequence is MSRVLWTLWVLGAVTNL. Topologically, residues 18 to 589 are extracellular; sequence SKEEAPDQSS…RLSVSECHRT (572 aa). Residues Cys31 and Cys37 are joined by a disulfide bond. LRR repeat units lie at residues 54–77, 78–101, 102–125, 126–150, 151–175, 176–199, 200–223, 224–250, 251–278, 279–308, 309–337, 338–361, 362–388, 389–414, 415–437, 438–457, 458–478, 479–500, and 501–524; these read AVRS…RDCV, NLKA…LSLW, SLEH…RPLS, SLKF…SQLT, NLRI…AGLT, FLEE…KSIQ, NISY…DLSS, SLKH…ETHT, LVKK…NYVS, GVLE…KNIG, QIET…SLTE, DVKR…QHLK, SLEY…DAWP, SLQT…LTLK, NLTN…QWPE, KMKY…GCIP, KTLE…LNLP, QLKE…SLLP, and MLLV…DSFH. Residue Asn115 is glycosylated (N-linked (GlcNAc...) asparagine). N-linked (GlcNAc...) asparagine glycans are attached at residues Asn200 and Asn246. Cysteines 354 and 383 form a disulfide. 2 N-linked (GlcNAc...) asparagine glycosylation sites follow: Asn415 and Asn443. An intrachain disulfide couples Cys433 to Cys455. Positions 525–579 constitute an LRRCT domain; that stretch reads TLKTLEAGGNNFICSCEFLSFTQEQQALAKVLIDWPANYLCDSPSHVRGQQVQDV. A helical membrane pass occupies residues 590 to 610; that stretch reads ALVSGMCCALFLLILLTEVLC. At 611-785 the chain is on the cytoplasmic side; the sequence is HRFHGLWYMR…WLNLRTAIKS (175 aa). Residues 640-783 enclose the TIR domain; sequence VCYDAFVSYS…GFWLNLRTAI (144 aa). Residue Lys755 forms a Glycyl lysine isopeptide (Lys-Gly) (interchain with G-Cter in ubiquitin) linkage. Positions 762–779 match the ATG16L1-binding motif motif; that stretch reads YLEWPTDDAQQEGFWLNL.

Belongs to the Toll-like receptor family. In terms of assembly, interacts with LY96, TLR1 and TLR6 (via extracellular domain). TLR2 seems to exist in heterodimers with either TLR1 or TLR6 before stimulation by the ligand. The heterodimers form bigger oligomers in response to their corresponding ligands as well as further heterotypic associations with other receptors such as CD14 and/or CD36. Binds MYD88 (via TIR domain). Interacts with TICAM1. Interacts with CNPY3. Interacts with ATG16L1. Interacts with PPP1R11. Interacts with TICAM2. Interacts with TIRAP. Post-translationally, ubiquitinated at Lys-755 by PPP1R11, leading to its degradation. Deubiquitinated by USP2. Glycosylation of Asn-443 is critical for secretion of the N-terminal ectodomain of TLR2.

It localises to the membrane. Its subcellular location is the cytoplasmic vesicle. The protein resides in the phagosome membrane. The protein localises to the membrane raft. Its function is as follows. Cooperates with LY96 to mediate the innate immune response to bacterial lipoproteins and other microbial cell wall components. Cooperates with TLR1 or TLR6 to mediate the innate immune response to bacterial lipoproteins or lipopeptides. Acts via MYD88 and TRAF6, leading to NF-kappa-B activation, cytokine secretion and the inflammatory response. May also promote apoptosis in response to lipoproteins. Forms activation clusters composed of several receptors depending on the ligand, these clusters trigger signaling from the cell surface and subsequently are targeted to the Golgi in a lipid-raft dependent pathway. Forms the cluster TLR2:TLR6:CD14:CD36 in response to diacylated lipopeptides and TLR2:TLR1:CD14 in response to triacylated lipopeptides. The chain is Toll-like receptor 2 (TLR2) from Canis lupus familiaris (Dog).